Consider the following 210-residue polypeptide: MTKGILGKKIGMTQVFDEAGKVVPVTVIEAGPCVVVQKKTVEKDGYAAIQVGFEDIKETKLNKPLRGHFAKHGVKPKRYLRELRLKDADKYEVGQEIRVDIFSPGERVDVTGISKAKGFQGVIKRHGQQRGPMSHGSMYHRRVGSMGSNTFPARTFPGKKMPGRMGGQRVTVLNLQVVKVDPERNLLLVKGSVPGNKNSLLIIRDSVKSK.

Belongs to the universal ribosomal protein uL3 family. Part of the 50S ribosomal subunit. Forms a cluster with proteins L14 and L19.

In terms of biological role, one of the primary rRNA binding proteins, it binds directly near the 3'-end of the 23S rRNA, where it nucleates assembly of the 50S subunit. This is Large ribosomal subunit protein uL3 from Caldicellulosiruptor saccharolyticus (strain ATCC 43494 / DSM 8903 / Tp8T 6331).